Here is a 75-residue protein sequence, read N- to C-terminus: Small ribosomal subunit protein bS16 (75 aa).

Belongs to the bacterial ribosomal protein bS16 family.

In Campylobacter jejuni subsp. jejuni serotype O:23/36 (strain 81-176), this protein is Small ribosomal subunit protein bS16.